The sequence spans 377 residues: Cytochrome c peroxidase, mitochondrial (377 aa).

The transit peptide at 1–17 (MSFRAPNLIRSAAGRRA) directs the protein to the mitochondrion. The active-site Proton acceptor is the histidine 138. Histidine 261 contributes to the heme b binding site. Tryptophan 277 acts as the Tryptophan radical intermediate in catalysis.

It belongs to the peroxidase family. Cytochrome c peroxidase subfamily. As to quaternary structure, forms a one-to-one complex with cytochrome c. Heme b serves as cofactor.

The protein resides in the mitochondrion matrix. It is found in the mitochondrion intermembrane space. The enzyme catalyses 2 Fe(II)-[cytochrome c] + H2O2 + 2 H(+) = 2 Fe(III)-[cytochrome c] + 2 H2O. Destroys radicals which are normally produced within the cells and which are toxic to biological systems. In Cryptococcus neoformans var. neoformans serotype D (strain JEC21 / ATCC MYA-565) (Filobasidiella neoformans), this protein is Cytochrome c peroxidase, mitochondrial (CCP1).